The following is a 194-amino-acid chain: Anaphase-promoting complex subunit CDC26 (194 aa).

Residues 47–194 are disordered; sequence EPMDQSEPPR…PSSNTRSHRH (148 aa). Composition is skewed to polar residues over residues 79–94 and 102–112; these read GECT…TSAR and LTLSTPVNPVS. 2 stretches are compositionally biased toward low complexity: residues 154 to 166 and 174 to 194; these read DESP…PESP and TPGN…SHRH.

The protein belongs to the CDC26 family. In terms of assembly, the APC/C complex is probably composed of at least 12 subunits: apc-2, apc-10, apc-11, cdc-26, emb-1, emb-27, emb-30, mat-1, mat-2, mat-3, such-1 and gfi-3.

The protein localises to the nucleus. It participates in protein modification; protein ubiquitination. Its function is as follows. Probable component of the anaphase promoting complex/cyclosome (APC/C), a cell cycle-regulated E3 ubiquitin ligase that controls progression through mitosis and the G1 phase of the cell cycle. The APC/C complex acts by mediating ubiquitination and subsequent degradation of target proteins. Developmental role in early embryogenesis and the metaphase to anaphase transition in meiosis and mitosis. Required for embryonic anterior-posterior axis formation. This Caenorhabditis elegans protein is Anaphase-promoting complex subunit CDC26.